Consider the following 122-residue polypeptide: 5'-AMP-activated protein kinase subunit beta-1 (122 aa).

Residues S5, S61, S66, and S73 each carry the phosphoserine modification. The interval 33–122 (EVNDKASAQA…TVNNIIQVKK (90 aa)) is glycogen-binding domain. T113 bears the Phosphothreonine mark.

The protein belongs to the 5'-AMP-activated protein kinase beta subunit family. In terms of assembly, AMPK is a heterotrimer of an alpha catalytic subunit (PRKAA1 or PRKAA2), a beta (PRKAB1 or PRKAB2) and a gamma non-catalytic subunits (PRKAG1, PRKAG2 or PRKAG3). Interacts with FNIP1 and FNIP2. In terms of processing, phosphorylated when associated with the catalytic subunit (PRKAA1 or PRKAA2). Phosphorylated by ULK1; leading to negatively regulate AMPK activity and suggesting the existence of a regulatory feedback loop between ULK1 and AMPK.

Functionally, non-catalytic subunit of AMP-activated protein kinase (AMPK), an energy sensor protein kinase that plays a key role in regulating cellular energy metabolism. In response to reduction of intracellular ATP levels, AMPK activates energy-producing pathways and inhibits energy-consuming processes: inhibits protein, carbohydrate and lipid biosynthesis, as well as cell growth and proliferation. AMPK acts via direct phosphorylation of metabolic enzymes, and by longer-term effects via phosphorylation of transcription regulators. Also acts as a regulator of cellular polarity by remodeling the actin cytoskeleton; probably by indirectly activating myosin. Beta non-catalytic subunit acts as a scaffold on which the AMPK complex assembles, via its C-terminus that bridges alpha (PRKAA1 or PRKAA2) and gamma subunits (PRKAG1, PRKAG2 or PRKAG3). The sequence is that of 5'-AMP-activated protein kinase subunit beta-1 (PRKAB1) from Sus scrofa (Pig).